Consider the following 668-residue polypeptide: UvrABC system protein B (668 aa).

Positions 36 to 423 (DNIKGGEKAQ…TETVVEQIIR (388 aa)) constitute a Helicase ATP-binding domain. 49–56 (GATGTGKT) provides a ligand contact to ATP. The Beta-hairpin motif lies at 102-125 (YYDYYQPEAYVPSSDTYIEKDSSI). The Helicase C-terminal domain occupies 440-606 (QMDDLLGEIN…TIKKEIRDLI (167 aa)). The UVR domain maps to 632-667 (QEAIKKLQKQMHEAAELLDFELAAQIRDMVLELKSM).

Belongs to the UvrB family. In terms of assembly, forms a heterotetramer with UvrA during the search for lesions. Interacts with UvrC in an incision complex.

The protein resides in the cytoplasm. Functionally, the UvrABC repair system catalyzes the recognition and processing of DNA lesions. A damage recognition complex composed of 2 UvrA and 2 UvrB subunits scans DNA for abnormalities. Upon binding of the UvrA(2)B(2) complex to a putative damaged site, the DNA wraps around one UvrB monomer. DNA wrap is dependent on ATP binding by UvrB and probably causes local melting of the DNA helix, facilitating insertion of UvrB beta-hairpin between the DNA strands. Then UvrB probes one DNA strand for the presence of a lesion. If a lesion is found the UvrA subunits dissociate and the UvrB-DNA preincision complex is formed. This complex is subsequently bound by UvrC and the second UvrB is released. If no lesion is found, the DNA wraps around the other UvrB subunit that will check the other stand for damage. In Streptococcus thermophilus (strain CNRZ 1066), this protein is UvrABC system protein B.